A 311-amino-acid polypeptide reads, in one-letter code: Acetyl-coenzyme A carboxylase carboxyl transferase subunit alpha (311 aa).

Positions 36-286 (NLSKEISKVY…ANYFISELAE (251 aa)) constitute a CoA carboxyltransferase C-terminal domain.

It belongs to the AccA family. As to quaternary structure, acetyl-CoA carboxylase is a heterohexamer composed of biotin carboxyl carrier protein (AccB), biotin carboxylase (AccC) and two subunits each of ACCase subunit alpha (AccA) and ACCase subunit beta (AccD).

It localises to the cytoplasm. The catalysed reaction is N(6)-carboxybiotinyl-L-lysyl-[protein] + acetyl-CoA = N(6)-biotinyl-L-lysyl-[protein] + malonyl-CoA. Its pathway is lipid metabolism; malonyl-CoA biosynthesis; malonyl-CoA from acetyl-CoA: step 1/1. In terms of biological role, component of the acetyl coenzyme A carboxylase (ACC) complex. First, biotin carboxylase catalyzes the carboxylation of biotin on its carrier protein (BCCP) and then the CO(2) group is transferred by the carboxyltransferase to acetyl-CoA to form malonyl-CoA. In Campylobacter concisus (strain 13826), this protein is Acetyl-coenzyme A carboxylase carboxyl transferase subunit alpha.